The chain runs to 210 residues: Small ribosomal subunit protein eS8y (210 aa).

The interval 1-22 is disordered; that stretch reads MGISRDSIHKRRATGGKQKMWR. A compositionally biased stretch (basic residues) spans 8-22; it reads IHKRRATGGKQKMWR.

Belongs to the eukaryotic ribosomal protein eS8 family.

This Arabidopsis thaliana (Mouse-ear cress) protein is Small ribosomal subunit protein eS8y (RPS8B).